We begin with the raw amino-acid sequence, 197 residues long: Nucleoside triphosphate pyrophosphatase (197 aa).

The Proton acceptor role is filled by D71.

Belongs to the Maf family. It depends on a divalent metal cation as a cofactor.

Its subcellular location is the cytoplasm. The catalysed reaction is a ribonucleoside 5'-triphosphate + H2O = a ribonucleoside 5'-phosphate + diphosphate + H(+). The enzyme catalyses a 2'-deoxyribonucleoside 5'-triphosphate + H2O = a 2'-deoxyribonucleoside 5'-phosphate + diphosphate + H(+). Nucleoside triphosphate pyrophosphatase. May have a dual role in cell division arrest and in preventing the incorporation of modified nucleotides into cellular nucleic acids. This is Nucleoside triphosphate pyrophosphatase from Trichormus variabilis (strain ATCC 29413 / PCC 7937) (Anabaena variabilis).